Reading from the N-terminus, the 108-residue chain is Nucleoid-associated protein BTH_I2220 (108 aa).

This sequence belongs to the YbaB/EbfC family. Homodimer.

The protein resides in the cytoplasm. Its subcellular location is the nucleoid. Binds to DNA and alters its conformation. May be involved in regulation of gene expression, nucleoid organization and DNA protection. This is Nucleoid-associated protein BTH_I2220 from Burkholderia thailandensis (strain ATCC 700388 / DSM 13276 / CCUG 48851 / CIP 106301 / E264).